A 327-amino-acid polypeptide reads, in one-letter code: 2-phosphoglycerate kinase (327 aa).

Residues 1–20 are compositionally biased toward basic and acidic residues; sequence MSEKSSRKERDEKTEKETAR. The tract at residues 1–27 is disordered; sequence MSEKSSRKERDEKTEKETARQGKHRRI. The ATP-cone domain occupies 25–111; it reads RRIRVKSRHY…LWRRIKKREE (87 aa).

This sequence belongs to the 2-phosphoglycerate kinase family. It depends on a divalent metal cation as a cofactor.

The catalysed reaction is (2R)-2-phosphoglycerate + ATP = (2R)-2,3-bisphosphoglycerate + ADP + H(+). The protein operates within thermoadapter biosynthesis; cyclic 2,3-diphosphoglycerate biosynthesis; cyclic 2,3-diphosphoglycerate from 2-phospho-D-glycerate: step 1/2. Functionally, catalyzes the phosphorylation of 2-phosphoglycerate to 2,3-diphosphoglycerate. Involved in the biosynthesis of cyclic 2,3-bisphosphoglycerate, a thermoprotectant. This is 2-phosphoglycerate kinase from Methanopyrus kandleri (strain AV19 / DSM 6324 / JCM 9639 / NBRC 100938).